Consider the following 219-residue polypeptide: MKSFVVAPFIVVIDGPAASGKGTLARRIATHYGMPHLDTGLTYRAVAKALLDKGLPLDDEALATDAALSLDLLAMDKAVLSAHAIGEAASKVAVMPAVRRALVEAQRHFANALPSSVLDGRDIGTVVCPDAAIKLFVTASPEVRARRRFDEVLARGDTADFAEILADLKKRDERDMNRTDSPLRPAEDAHLLDTSEMSIEAAFLAAKKLIDHALAQHRG.

15 to 23 provides a ligand contact to ATP; the sequence is GPAASGKGT.

Belongs to the cytidylate kinase family. Type 1 subfamily.

The protein localises to the cytoplasm. The enzyme catalyses CMP + ATP = CDP + ADP. The catalysed reaction is dCMP + ATP = dCDP + ADP. This Brucella melitensis biotype 1 (strain ATCC 23456 / CCUG 17765 / NCTC 10094 / 16M) protein is Cytidylate kinase.